A 498-amino-acid polypeptide reads, in one-letter code: MDPRARYPPGIGNGRGGNPNYYGRGPPPSQHQQHQHQHQQPPHPHHHQYVQRQPQPQQTPHNSQHQQWLRRNQIAAEAAGASEQKAPPVADGIDSSSQDWKAQLKLPPQDTRYRTEDVTATKGNEFEDYFLKRELLMGIYEKGFERPSPIQEESIPIALTGSDILARAKNGTGKTAAFCIPALEKIDQDKNAIQVVILVPTRELALQTSQVCKELGKHLKIQVMVTTGGTSLKDDIVRLYQPVHLLVGTPGRILDLTKKGVCVLKNCSMLVMDEADKLLSPEFQPSIQELIRYLPSNRQILMFSATFPVTVKEFKDKYLPKPYVINLMDELTLKGITQFYAFVEERQKVHCLNTLFSKLQINQSIIFCNSVNRVELLAKKITELGYSCFYIHAKMLQDHRNRVFHDFRNGACRNLVCTDLFTRGIDIQAVNVVINFDFPKSAETYLHRVGRSGRFGHLGLAVNLITYEDRFNLYRIEQELGTEIKPIPPQIDRAIYCQ.

Residues 1-109 (MDPRARYPPG…WKAQLKLPPQ (109 aa)) form a disordered region. Residues 33–49 (QHQHQHQQPPHPHHHQY) are compositionally biased toward basic residues. Low complexity-rich tracts occupy residues 50–61 (VQRQPQPQQTPH) and 75–86 (AAEAAGASEQKA). The Q motif motif lies at 124 to 152 (NEFEDYFLKRELLMGIYEKGFERPSPIQE). A Helicase ATP-binding domain is found at 155–325 (IPIALTGSDI…DKYLPKPYVI (171 aa)). Residue 168 to 175 (AKNGTGKT) participates in ATP binding. Residues 273–276 (DEAD) carry the DEAD box motif. The Helicase C-terminal domain occupies 335-495 (GITQFYAFVE…PIPPQIDRAI (161 aa)).

It belongs to the DEAD box helicase family. DDX6/DHH1 subfamily.

The protein resides in the cytoplasm. The protein localises to the P-body. It catalyses the reaction ATP + H2O = ADP + phosphate + H(+). In terms of biological role, ATP-dependent RNA helicase involved in mRNA turnover, and more specifically in mRNA decapping. The polypeptide is DEAD-box ATP-dependent RNA helicase 6 (Oryza sativa subsp. japonica (Rice)).